Here is a 723-residue protein sequence, read N- to C-terminus: Vacuolar protein sorting-associated protein 52 homolog (723 aa).

Residue Ala2 is modified to N-acetylalanine. 2 coiled-coil regions span residues 107–127 (ENIA…ERME) and 194–215 (RFLE…QEAR). A Phosphoserine modification is found at Ser355.

The protein belongs to the VPS52 family. As to quaternary structure, component of the Golgi-associated retrograde protein (GARP) complex, also called VFT (VPS fifty-three) complex, composed of VPS51, VPS52, VPS53 and VPS54. Component of the endosome-associated retrograde protein (EARP) complex, composed of VPS51, VPS52, VPS53 and VPS50/Syndetin. EIPR1 interacts with both EARP and GARP complexes and mediates the recruitment of the GARP complex to the trans-Golgi network. Interacts with RAB6A and STX10. Interacts with BLTP3B.

The protein localises to the golgi apparatus. It localises to the trans-Golgi network membrane. It is found in the endosome membrane. Its subcellular location is the recycling endosome. Acts as a component of the GARP complex that is involved in retrograde transport from early and late endosomes to the trans-Golgi network (TGN). The GARP complex is required for the maintenance of the cycling of mannose 6-phosphate receptors between the TGN and endosomes, this cycling is necessary for proper lysosomal sorting of acid hydrolases such as CTSD. Acts as a component of the EARP complex that is involved in endocytic recycling. The EARP complex associates with Rab4-positive endosomes and promotes recycling of internalized transferrin receptor (TFRC) to the plasma membrane. The protein is Vacuolar protein sorting-associated protein 52 homolog (VPS52) of Homo sapiens (Human).